Here is a 307-residue protein sequence, read N- to C-terminus: Ribonuclease Z (307 aa).

The Zn(2+) site is built by H63, H65, D67, H68, H140, D211, and H269. Catalysis depends on D67, which acts as the Proton acceptor.

The protein belongs to the RNase Z family. As to quaternary structure, homodimer. Zn(2+) is required as a cofactor.

The enzyme catalyses Endonucleolytic cleavage of RNA, removing extra 3' nucleotides from tRNA precursor, generating 3' termini of tRNAs. A 3'-hydroxy group is left at the tRNA terminus and a 5'-phosphoryl group is left at the trailer molecule.. Its function is as follows. Zinc phosphodiesterase, which displays some tRNA 3'-processing endonuclease activity. Probably involved in tRNA maturation, by removing a 3'-trailer from precursor tRNA. The sequence is that of Ribonuclease Z from Bacillus subtilis (strain 168).